A 406-amino-acid chain; its full sequence is Tyrosine--tRNA ligase (406 aa).

Y35 contacts L-tyrosine. Positions P40–H49 match the 'HIGH' region motif. 2 residues coordinate L-tyrosine: Y168 and Q172. The 'KMSKS' region signature appears at K228–S232. K231 lines the ATP pocket. Residues I339–F405 enclose the S4 RNA-binding domain.

Belongs to the class-I aminoacyl-tRNA synthetase family. TyrS type 1 subfamily. Homodimer.

The protein resides in the cytoplasm. The enzyme catalyses tRNA(Tyr) + L-tyrosine + ATP = L-tyrosyl-tRNA(Tyr) + AMP + diphosphate + H(+). In terms of biological role, catalyzes the attachment of tyrosine to tRNA(Tyr) in a two-step reaction: tyrosine is first activated by ATP to form Tyr-AMP and then transferred to the acceptor end of tRNA(Tyr). The chain is Tyrosine--tRNA ligase from Treponema denticola (strain ATCC 35405 / DSM 14222 / CIP 103919 / JCM 8153 / KCTC 15104).